Consider the following 329-residue polypeptide: Serpentine receptor class alpha-4 (329 aa).

Helical transmembrane passes span 25-45 (IIVLIPVFITFIFTYYAIKVV), 103-123 (LYLEVFVSGVAGMVYGQTGLL), 144-164 (GLAISVSVLCLSFITSRLIIW), 188-208 (YFQSICTLLALFNLVTSILIW), 238-258 (ICFLTFVQFIFFLVYSLGFFI), and 273-293 (LVAVWLYTPPYIAASFPILIF).

Belongs to the nematode receptor-like protein sra family.

The protein resides in the membrane. The protein is Serpentine receptor class alpha-4 (sra-4) of Caenorhabditis elegans.